A 495-amino-acid chain; its full sequence is Probable lysine-specific demethylase 4A (495 aa).

Positions 18–60 (IMTFRPSYEEFQNFSAYIEYIESRGAHLAGLAKIQPPAEWVPR) constitute a JmjN domain. Tyr139 serves as a coordination point for 2-oxoglutarate. A JmjC domain is found at 149 to 315 (DEDLDVWNIG…YGKRASICRC (167 aa)). 2 residues coordinate Fe cation: His195 and Glu197. Positions 205 and 213 each coordinate 2-oxoglutarate. Positions 241 and 247 each coordinate Zn(2+). Lys248 contributes to the 2-oxoglutarate binding site. His283 contacts Fe cation. Zn(2+)-binding residues include Cys313 and Cys315. A Phosphoserine modification is found at Ser409.

Belongs to the JHDM3 histone demethylase family. It depends on Fe(2+) as a cofactor.

It is found in the nucleus. It carries out the reaction N(6),N(6),N(6)-trimethyl-L-lysyl(9)-[histone H3] + 2 2-oxoglutarate + 2 O2 = N(6)-methyl-L-lysyl(9)-[histone H3] + 2 formaldehyde + 2 succinate + 2 CO2. The enzyme catalyses N(6),N(6),N(6)-trimethyl-L-lysyl(36)-[histone H3] + 2 2-oxoglutarate + 2 O2 = N(6)-methyl-L-lysyl(36)-[histone H3] + 2 formaldehyde + 2 succinate + 2 CO2. Its function is as follows. Probable histone demethylase that specifically demethylates 'Lys-9' and 'Lys-36' residues of histone H3, thereby playing a central role in histone code. Demethylation of Lys residue generates formaldehyde and succinate. The sequence is that of Probable lysine-specific demethylase 4A (Kdm4A) from Drosophila melanogaster (Fruit fly).